Reading from the N-terminus, the 182-residue chain is Ribosome-recycling factor (182 aa).

Belongs to the RRF family.

It is found in the cytoplasm. Its function is as follows. Responsible for the release of ribosomes from messenger RNA at the termination of protein biosynthesis. May increase the efficiency of translation by recycling ribosomes from one round of translation to another. In Picosynechococcus sp. (strain ATCC 27264 / PCC 7002 / PR-6) (Agmenellum quadruplicatum), this protein is Ribosome-recycling factor.